We begin with the raw amino-acid sequence, 444 residues long: Putative cytochrome P450 120 (444 aa).

Heme is bound at residue C391.

Belongs to the cytochrome P450 family. Heme serves as cofactor.

The sequence is that of Putative cytochrome P450 120 (cyp120) from Synechocystis sp. (strain ATCC 27184 / PCC 6803 / Kazusa).